The sequence spans 218 residues: Ras-related protein Rab-4A (218 aa).

Residues Gly23, Thr24, Gly25, Lys26, Ser27, Cys28, Ser42, His44, and Thr45 each coordinate GTP. Ser27 serves as a coordination point for Mg(2+). The Switch 1 signature appears at His44–Glu49. Mg(2+) contacts are provided by Thr45 and Asp68. Residues Ala70–Thr79 carry the Switch 2 motif. Position 71 (Gly71) interacts with GTP. Gln72 is modified (5-glutamyl serotonin). Residues Asn126, Lys127, Asp129, Ala157, and Leu158 each coordinate GTP. Phosphoserine is present on Ser190. Ser204 bears the Phosphoserine; by CDK1 mark. Residues Cys216 and Cys218 are each lipidated (S-geranylgeranyl cysteine). The residue at position 218 (Cys218) is a Cysteine methyl ester.

Belongs to the small GTPase superfamily. Rab family. Interacts with RAB11FIP1, RABEP1, ZFYVE20 and RUFY1. Interacts with SGSM1, SGSM2 and SGSM3. Interacts (membrane-bound form) with NDRG1; the interaction involves NDRG1 in vesicular recycling of E-cadherin. Interacts (in GTP-bound form) with GRIPAP1. Interacts with RABEP1 and RBSN. Does not interact with HPS4. It depends on Mg(2+) as a cofactor. Post-translationally, serotonylation of Gln-72 by TGM2 during activation and aggregation of platelets leads to constitutive activation of GTPase activity. In terms of processing, phosphorylated by CDK1 kinase during mitosis.

It is found in the membrane. Its subcellular location is the cytoplasm. The protein localises to the early endosome membrane. The protein resides in the recycling endosome membrane. It carries out the reaction GTP + H2O = GDP + phosphate + H(+). Its activity is regulated as follows. Regulated by guanine nucleotide exchange factors (GEFs) which promote the exchange of bound GDP for free GTP. Regulated by GTPase activating proteins (GAPs) which increase the GTP hydrolysis activity. Inhibited by GDP dissociation inhibitors (GDIs). The small GTPases Rab are key regulators of intracellular membrane trafficking, from the formation of transport vesicles to their fusion with membranes. Rabs cycle between an inactive GDP-bound form and an active GTP-bound form that is able to recruit to membranes different sets of downstream effectors directly responsible for vesicle formation, movement, tethering and fusion. RAB4A is involved in protein transport. Also plays a role in vesicular traffic. Mediates VEGFR2 endosomal trafficking to enhance VEGFR2 signaling. Acts as a regulator of platelet alpha-granule release during activation and aggregation of platelets. The protein is Ras-related protein Rab-4A (RAB4A) of Bos taurus (Bovine).